Consider the following 147-residue polypeptide: Hemoglobin subunit gamma (147 aa).

In terms of domain architecture, Globin spans 3–147; that stretch reads HFTAEEKAAI…VANALAYKYH (145 aa). Heme b contacts are provided by histidine 64 and histidine 93.

This sequence belongs to the globin family. In terms of assembly, heterotetramer of two alpha chains and two gamma chains in fetal hemoglobin (Hb F). As to expression, red blood cells.

Its function is as follows. Gamma chains make up the fetal hemoglobin F, in combination with alpha chains. The protein is Hemoglobin subunit gamma (HBG) of Elephas maximus (Indian elephant).